The chain runs to 465 residues: Serine/threonine-protein kinase 38 (465 aa).

Alanine 2 carries the post-translational modification N-acetylalanine. Residues 62-87 form an interaction with S100B region; it reads KRLRRSAHARKETEFLRLKRTRLGLE. The residue at position 74 (threonine 74) is a Phosphothreonine. The Protein kinase domain maps to 89-382; the sequence is FESLKVIGRG…VEEIKNNLFF (294 aa). Residues 95 to 103 and lysine 118 each bind ATP; that span reads IGRGAFGEV. Residue aspartate 212 is the Proton acceptor of the active site. Serine 264 is modified (phosphoserine). Serine 281 is modified (phosphoserine; by autocatalysis). A UFM1-interacting motif (UFIM) motif is present at residues 306–311; that stretch reads WSLGVI. One can recognise an AGC-kinase C-terminal domain in the interval 383–455; the sequence is EGVDWEHIRE…KRFEGLTARG (73 aa). A Phosphothreonine; by STK24/MST3 modification is found at threonine 444.

The protein belongs to the protein kinase superfamily. AGC Ser/Thr protein kinase family. Homodimeric S100B binds two molecules of STK38. Interacts with MOB1 and MOB2. Interacts with MAP3K1 and MAP3K2 (via the kinase catalytic domain). Forms a tripartite complex with MOBKL1B and STK3/MST2. Interacts with MICAL1; leading to inhibit the protein kinase activity by antagonizing activation by MST1/STK4. It depends on Mg(2+) as a cofactor. Post-translationally, ISGylated. In terms of processing, phosphorylated by STK3/MST2 and this is enhanced by MOBKL1B. In terms of tissue distribution, expressed at high levels in spleen, lung, thymus, brain and fat tissue.

It is found in the nucleus. Its subcellular location is the cytoplasm. The protein resides in the chromosome. It catalyses the reaction L-seryl-[protein] + ATP = O-phospho-L-seryl-[protein] + ADP + H(+). It carries out the reaction L-threonyl-[protein] + ATP = O-phospho-L-threonyl-[protein] + ADP + H(+). With respect to regulation, activated by binding of S100B which releases autoinhibitory N-lobe interactions, enabling ATP to bind and the autophosphorylation of Ser-281. Thr-444 then undergoes calcium-dependent phosphorylation by STK24/MST3. Interactions between phosphorylated Thr-444 and the N-lobe promote additional structural changes that complete the activation of the kinase. Autoinhibition is also released by the binding of MOB1/MOBKL1A and MOB2/HCCA2 to the N-terminal of STK38. Functionally, serine/threonine-protein kinase that acts as a negative regulator of MAP3K1/2 signaling. Converts MAP3K2 from its phosphorylated form to its non-phosphorylated form and inhibits autophosphorylation of MAP3K2. Acts as an ufmylation 'reader' in a kinase-independent manner: specifically recognizes and binds mono-ufmylated histone H4 in response to DNA damage, promoting the recruitment of SUV39H1 to the double-strand breaks, resulting in ATM activation. The polypeptide is Serine/threonine-protein kinase 38 (Mus musculus (Mouse)).